Reading from the N-terminus, the 490-residue chain is Betaine aldehyde dehydrogenase (490 aa).

Positions 27 and 93 each coordinate K(+). Residue 150–152 (GAW) participates in NAD(+) binding. The active-site Charge relay system is the Lys162. 176 to 179 (KPSE) is an NAD(+) binding site. Residue Val180 participates in K(+) binding. NAD(+) is bound at residue 230 to 233 (GTDT). K(+) is bound at residue Leu246. Glu252 functions as the Proton acceptor in the catalytic mechanism. Positions 254, 286, and 387 each coordinate NAD(+). The Nucleophile role is filled by Cys286. The residue at position 286 (Cys286) is a Cysteine sulfenic acid (-SOH). Residues Lys457 and Gly460 each coordinate K(+). The active-site Charge relay system is the Glu464.

The protein belongs to the aldehyde dehydrogenase family. As to quaternary structure, dimer of dimers. It depends on K(+) as a cofactor.

The catalysed reaction is betaine aldehyde + NAD(+) + H2O = glycine betaine + NADH + 2 H(+). It functions in the pathway amine and polyamine biosynthesis; betaine biosynthesis via choline pathway; betaine from betaine aldehyde: step 1/1. Its function is as follows. Involved in the biosynthesis of the osmoprotectant glycine betaine. Catalyzes the irreversible oxidation of betaine aldehyde to the corresponding acid. The chain is Betaine aldehyde dehydrogenase from Pseudomonas fluorescens (strain ATCC BAA-477 / NRRL B-23932 / Pf-5).